A 372-amino-acid polypeptide reads, in one-letter code: Aminomethyltransferase (372 aa).

The protein belongs to the GcvT family. As to quaternary structure, the glycine cleavage system is composed of four proteins: P, T, L and H.

It catalyses the reaction N(6)-[(R)-S(8)-aminomethyldihydrolipoyl]-L-lysyl-[protein] + (6S)-5,6,7,8-tetrahydrofolate = N(6)-[(R)-dihydrolipoyl]-L-lysyl-[protein] + (6R)-5,10-methylene-5,6,7,8-tetrahydrofolate + NH4(+). Its function is as follows. The glycine cleavage system catalyzes the degradation of glycine. This is Aminomethyltransferase from Rubrobacter xylanophilus (strain DSM 9941 / JCM 11954 / NBRC 16129 / PRD-1).